A 746-amino-acid polypeptide reads, in one-letter code: Quiannulatene synthase (746 aa).

Positions 1–336 (MASEVIVISD…SRYPTKTELN (336 aa)) are sesterterpenoid synthase. Mg(2+) is bound at residue aspartate 95. The segment at 338-746 (PEVIIVDGEL…VELMLRRLWV (409 aa)) is geranylfarnesyl diphosphate synthase. Isopentenyl diphosphate-binding residues include lysine 465, arginine 468, and histidine 497. Positions 504 and 508 each coordinate Mg(2+). Arginine 513 is a dimethylallyl diphosphate binding site. Arginine 514 contributes to the isopentenyl diphosphate binding site. Dimethylallyl diphosphate-binding residues include lysine 591, threonine 592, glutamine 628, asparagine 635, and lysine 645.

This sequence in the N-terminal section; belongs to the terpene synthase family. The protein in the C-terminal section; belongs to the FPP/GGPP synthase family. Mg(2+) serves as cofactor.

The enzyme catalyses isopentenyl diphosphate + (2E,6E)-farnesyl diphosphate = (2E,6E,10E)-geranylgeranyl diphosphate + diphosphate. It catalyses the reaction (2E,6E,10E,14E)-geranylfarnesyl diphosphate = quiannulatene + diphosphate. Its pathway is secondary metabolite biosynthesis; terpenoid biosynthesis. Bifunctional sesterterpene synthase; part of the gene cluster that mediates the biosynthesis of the pentacyclic sesterterpene quiannulatic acid. The first step of the pathway is performed by the sesterterpene synthase (QS) that possesses both prenyl transferase and terpene cyclase activity, converting isopentenyl diphosphate and dimethylallyl diphosphate into geranylfarnesyl diphosphate (GFPP) and further converting GFPP into quiannulatene via an unprecedented cyclization mode which involves three rounds of hydride shifts and two successive C-C bond migrations to construct the 5-6-5-5-5 fused ring. The cytochrome P450 monooxygenase Qnn-P450 then oxidizes quiannulatene at C-19 in 3 successive reactions to afford quiannulatic acid. The polypeptide is Quiannulatene synthase (Emericella variicolor (Aspergillus stellatus)).